Consider the following 520-residue polypeptide: GMP synthase [glutamine-hydrolyzing] (520 aa).

Positions 12–205 (KIIVLDYGSQ…AIFICGARGD (194 aa)) constitute a Glutamine amidotransferase type-1 domain. Catalysis depends on cysteine 89, which acts as the Nucleophile. Active-site residues include histidine 179 and glutamate 181. The region spanning 206 to 395 (WSMDNFIDMQ…LGMPENIVWR (190 aa)) is the GMPS ATP-PPase domain. 233–239 (SGGVDSS) serves as a coordination point for ATP.

In terms of assembly, homodimer.

The enzyme catalyses XMP + L-glutamine + ATP + H2O = GMP + L-glutamate + AMP + diphosphate + 2 H(+). The protein operates within purine metabolism; GMP biosynthesis; GMP from XMP (L-Gln route): step 1/1. Its function is as follows. Catalyzes the synthesis of GMP from XMP. This Streptococcus uberis (strain ATCC BAA-854 / 0140J) protein is GMP synthase [glutamine-hydrolyzing].